A 1150-amino-acid polypeptide reads, in one-letter code: Cohesin subunit SCC3 (1150 aa).

The segment covering 1–12 (MTAVRRSTRIRT) has biased composition (basic residues). Positions 1–122 (MTAVRRSTRI…PAYHRSKKDQ (122 aa)) are disordered. Ser28 carries the post-translational modification Phosphoserine. Residues 32–43 (VESDKITAKTQH) show a composition bias toward basic and acidic residues. The span at 44 to 72 (EEEEEQDTGESEESSSEDDYEDQDDDDYV) shows a compositional bias: acidic residues. The segment covering 77-87 (AKRKSRKRKPK) has biased composition (basic residues). The stretch at 305–349 (LTQQAVNLEKNYLAKLSKQLSLEEKKKRPNNKTLEKLESTIAETQ) forms a coiled coil. The region spanning 367–457 (FVHRYKDVSD…ERFKTKILEV (91 aa)) is the SCD domain. A Phosphoserine modification is found at Ser628. The interval 1065 to 1150 (ENPEPNKKNI…IDNSDEITQD (86 aa)) is disordered. Positions 1083-1101 (QREKAPLQPNSERETDHAN) are enriched in basic and acidic residues.

The protein belongs to the SCC3 family. In terms of assembly, interacts directly with MCD1 in cohesin complex. Cohesin complexes are composed of the SMC1 and SMC3 heterodimer attached via their hinge domain, MCD1 which link them, and IRR1/SCC3, which interacts with MCD1. The cohesin complex also interacts with SCC2, which is required for its association with chromosomes. Interacts with LIN1. Post-translationally, acetylated by ECO1.

It localises to the nucleus. The protein localises to the chromosome. It is found in the centromere. Functionally, component of cohesin complex, a complex required for the cohesion of sister chromatids after DNA replication. The cohesin complex apparently forms a large proteinaceous ring within which sister chromatids can be trapped. At anaphase, the MCD1/SCC1 subunit of the complex is cleaved and dissociates from chromatin, allowing sister chromatids to segregate. The cohesin complex may also play a role in spindle pole assembly during mitosis. This chain is Cohesin subunit SCC3 (IRR1), found in Saccharomyces cerevisiae (strain ATCC 204508 / S288c) (Baker's yeast).